Here is a 2415-residue protein sequence, read N- to C-terminus: Spectrin alpha chain (2415 aa).

Spectrin repeat units follow at residues 48–150, 154–254, 258–362, 366–464, 471–574, 577–679, 683–784, 788–890, and 894–963; these read RFQY…KLQQ, LVQF…QEKL, HEIQ…KLDE, LHRF…DRRI, DLQL…LLED, RYQQ…KLNE, QQQF…QHLL, QVQQ…QDLD, and QAHQ…RQQE. The 60-residue stretch at 970–1029 folds into the SH3 domain; sequence TGKECVVALYDYTEKSPREVSMKKGDVLTLLNSNNKDWWKVEVNDRQGFVPAAYIKKIDA. Phosphoserine is present on residues S1032 and S1034. Spectrin repeat units follow at residues 1079 to 1177, 1181 to 1284, 1287 to 1391, 1394 to 1496, 1500 to 1604, 1608 to 1710, 1714 to 1816, 1820 to 1921, 1926 to 2028, 2040 to 2141, and 2154 to 2252; these read VREA…ASQL, HEVQ…EKLL, YDLQ…QLEQ, DLQL…SRLG, TLQQ…KLKE, QRTY…RLNE, LHQF…KLDE, YQQF…GALL, YLQF…DRLL, LYLT…DGEL, and LRKE…NLEQ. EF-hand domains lie at 2265–2300 and 2308–2343; these read DSLKEFSMMFKHFDKDKSGKLNHQEFKSCLRALGYD and QPDPEFEAILDVVDPNRDGYVSLQEYIAFMISKETE. Ca(2+) is bound by residues D2278, D2280, S2282, K2284, E2289, D2321, N2323, D2325, Y2327, and E2332.

This sequence belongs to the spectrin family. In terms of assembly, native spectrin molecule is a tetramer composed of two antiparallel heterodimers joined head to head so that each end of the native molecule includes the C-terminus of the alpha subunit and the N-terminus of the beta subunit. Interacts with calmodulin in a calcium-dependent manner, interacts with F-actin and also interacts with Lva. Interacts with Ten-m. A substantial pool of maternal protein in the egg undergoes dynamic changes in distribution early in embryogenesis. In gastrulated embryo, the highest level of protein is found in the respiratory tract cells and the lowest in parts of the forming gut.

It localises to the cytoplasm. The protein resides in the cytoskeleton. It is found in the golgi apparatus. Its subcellular location is the cell projection. The protein localises to the cilium. It localises to the flagellum. Spectrin is the major constituent of the cytoskeletal network underlying the erythrocyte plasma membrane. It associates with band 4.1 and actin to form the cytoskeletal superstructure of the erythrocyte plasma membrane. Essential for larval survival and development. Stabilizes cell to cell interactions that are critical for the maintenance of cell shape and subcellular organization within embryonic tissues. Lva and spectrin may form a Golgi-based scaffold that mediates interaction of Golgi bodies with microtubules and facilitates Golgi-derived membrane secretion required for the formation of furrows during cellularization. This is Spectrin alpha chain (alpha-Spec) from Drosophila melanogaster (Fruit fly).